A 279-amino-acid chain; its full sequence is MLIIELLKAIFFGIIEGITEWLPVSSTGHLILVQEFIRLNQDKAFIEMFNIVIQLGAIIAVMLIYFERLNPFQPGKTAREVQLTWQLWLKVVIACIPSILIAVPLDNWFEAHFYFMVPIAIALIVYGIAFIWIEKQNAQQEPAVTDLARMSYKTAFFIGCFQVLSIVPGTSRSGATILGAIILGTSRTVAADFTFFLAIPTMFGYSGLKAVKFFLDGHHLDFAQVLILLVASLTAFVVSLLAIRFLTDYVKKHDFTIFGKYRIVLGSLLLIYSFFKFVF.

Helical transmembrane passes span 2–22 (LIIE…TEWL), 44–64 (AFIE…VMLI), 85–105 (WQLW…AVPL), 113–133 (FYFM…FIWI), 163–183 (VLSI…AIIL), 188–208 (TVAA…YSGL), 223–243 (AQVL…LLAI), and 255–275 (FTIF…YSFF).

Belongs to the UppP family.

The protein resides in the cell membrane. The catalysed reaction is di-trans,octa-cis-undecaprenyl diphosphate + H2O = di-trans,octa-cis-undecaprenyl phosphate + phosphate + H(+). In terms of biological role, catalyzes the dephosphorylation of undecaprenyl diphosphate (UPP). Confers resistance to bacitracin. This Streptococcus pyogenes serotype M2 (strain MGAS10270) protein is Undecaprenyl-diphosphatase.